A 239-amino-acid chain; its full sequence is AA9 family lytic polysaccharide monooxygenase C (239 aa).

Histidine 1 lines the Cu(2+) pocket. Cysteine 39 and cysteine 190 are joined by a disulfide. Asparagine 75 is a glycosylation site (N-linked (GlcNAc...) asparagine). A Cu(2+)-binding site is contributed by histidine 84. Asparagine 135 is a glycosylation site (N-linked (GlcNAc...) asparagine). Positions 157 and 166 each coordinate O2. Tyrosine 168 provides a ligand contact to Cu(2+). N-linked (GlcNAc...) asparagine glycans are attached at residues asparagine 194 and asparagine 229.

This sequence belongs to the polysaccharide monooxygenase AA9 family. It depends on Cu(2+) as a cofactor.

The protein localises to the secreted. It catalyses the reaction [(1-&gt;4)-beta-D-glucosyl]n+m + reduced acceptor + O2 = 4-dehydro-beta-D-glucosyl-[(1-&gt;4)-beta-D-glucosyl]n-1 + [(1-&gt;4)-beta-D-glucosyl]m + acceptor + H2O.. Functionally, lytic polysaccharide monooxygenase (LPMO) that depolymerizes crystalline and amorphous polysaccharides via the oxidation of scissile alpha- or beta-(1-4)-glycosidic bonds, yielding C1 or C4 oxidation products. Catalysis by LPMOs requires the reduction of the active-site copper from Cu(II) to Cu(I) by a reducing agent and H(2)O(2) or O(2) as a cosubstrate. This is AA9 family lytic polysaccharide monooxygenase C from Gloeophyllum trabeum (Brown rot fungus).